A 410-amino-acid chain; its full sequence is Argininosuccinate synthase (410 aa).

10–18 (AYSGGLDTS) serves as a coordination point for ATP. Positions 88 and 93 each coordinate L-citrulline. Glycine 118 serves as a coordination point for ATP. Residues threonine 120, asparagine 124, and aspartate 125 each coordinate L-aspartate. Residue asparagine 124 coordinates L-citrulline. L-citrulline is bound by residues arginine 128, serine 177, serine 186, glutamate 262, and tyrosine 274.

It belongs to the argininosuccinate synthase family. Type 1 subfamily. Homotetramer.

It is found in the cytoplasm. It catalyses the reaction L-citrulline + L-aspartate + ATP = 2-(N(omega)-L-arginino)succinate + AMP + diphosphate + H(+). The protein operates within amino-acid biosynthesis; L-arginine biosynthesis; L-arginine from L-ornithine and carbamoyl phosphate: step 2/3. In Thermoanaerobacter sp. (strain X514), this protein is Argininosuccinate synthase.